Here is a 466-residue protein sequence, read N- to C-terminus: Ribulose bisphosphate carboxylase large chain (466 aa).

Lysine 5 is modified (N6,N6,N6-trimethyllysine). Asparagine 114 and threonine 164 together coordinate substrate. The Proton acceptor role is filled by lysine 166. Residue lysine 168 participates in substrate binding. The Mg(2+) site is built by lysine 192, aspartate 194, and glutamate 195. Lysine 192 is modified (N6-carboxylysine). Histidine 285 (proton acceptor) is an active-site residue. Arginine 286, histidine 318, and serine 370 together coordinate substrate.

The protein belongs to the RuBisCO large chain family. Type I subfamily. As to quaternary structure, heterohexadecamer of 8 large chains and 8 small chains; disulfide-linked. The disulfide link is formed within the large subunit homodimers. Mg(2+) serves as cofactor. In terms of processing, the disulfide bond which can form in the large chain dimeric partners within the hexadecamer appears to be associated with oxidative stress and protein turnover.

It localises to the plastid. It is found in the chloroplast. It catalyses the reaction 2 (2R)-3-phosphoglycerate + 2 H(+) = D-ribulose 1,5-bisphosphate + CO2 + H2O. It carries out the reaction D-ribulose 1,5-bisphosphate + O2 = 2-phosphoglycolate + (2R)-3-phosphoglycerate + 2 H(+). Functionally, ruBisCO catalyzes two reactions: the carboxylation of D-ribulose 1,5-bisphosphate, the primary event in carbon dioxide fixation, as well as the oxidative fragmentation of the pentose substrate in the photorespiration process. Both reactions occur simultaneously and in competition at the same active site. The protein is Ribulose bisphosphate carboxylase large chain of Asarum canadense (Wild ginger).